The primary structure comprises 430 residues: Serine--tRNA ligase (430 aa).

T237 to E239 is a binding site for L-serine. R268 to E270 lines the ATP pocket. Residue E291 participates in L-serine binding. Position 355–358 (E355–S358) interacts with ATP. S391 is an L-serine binding site.

Belongs to the class-II aminoacyl-tRNA synthetase family. Type-1 seryl-tRNA synthetase subfamily. Homodimer. The tRNA molecule binds across the dimer.

The protein localises to the cytoplasm. The enzyme catalyses tRNA(Ser) + L-serine + ATP = L-seryl-tRNA(Ser) + AMP + diphosphate + H(+). It carries out the reaction tRNA(Sec) + L-serine + ATP = L-seryl-tRNA(Sec) + AMP + diphosphate + H(+). Its pathway is aminoacyl-tRNA biosynthesis; selenocysteinyl-tRNA(Sec) biosynthesis; L-seryl-tRNA(Sec) from L-serine and tRNA(Sec): step 1/1. In terms of biological role, catalyzes the attachment of serine to tRNA(Ser). Is also able to aminoacylate tRNA(Sec) with serine, to form the misacylated tRNA L-seryl-tRNA(Sec), which will be further converted into selenocysteinyl-tRNA(Sec). This is Serine--tRNA ligase from Baumannia cicadellinicola subsp. Homalodisca coagulata.